Reading from the N-terminus, the 856-residue chain is V-type proton ATPase subunit a (856 aa).

The Cytoplasmic segment spans residues 1–409; that stretch reads MAPKQDTPFR…NAYGTATYQE (409 aa). The chain crosses the membrane as a helical span at residues 410–428; sequence VNPAIPVIVTFPFLFAVMF. The Vacuolar portion of the chain corresponds to 429–430; sequence GD. The helical transmembrane segment at 431–447 threads the bilayer; it reads FGHALIMLCAALAMIYW. The Cytoplasmic segment spans residues 448-460; it reads EKPLKKVTFELFA. The helical transmembrane segment at 461-490 threads the bilayer; that stretch reads MVFYGRYIVLVMAVFSVYTGLIYNDVFSKS. Over 491 to 544 the chain is Vacuolar; sequence MTLFDSQWKWVVPENFKEGMTVKAVLREPNGYRYPFGLDWRWHGTENELLFINS. Residues 545–564 traverse the membrane as a helical segment; sequence YKMKMAIILGWAHMTYSLCF. At 565-582 the chain is on the cytoplasmic side; sequence SYINARHFKRPIDIWGNF. A helical membrane pass occupies residues 583–603; it reads VPGMIFFQSIFGYLVLCIIYK. Topologically, residues 604–648 are vacuolar; it reads WSVDWFGTGRQPPGLLNMLIYMFLQPGTLDGGVELYPGQATVQVI. Residues 649 to 668 traverse the membrane as a helical segment; that stretch reads LLLLAVIQVPILLFLKPFYL. At 669–738 the chain is on the cytoplasmic side; that stretch reads RWENNRARAK…EVMIHQVIHT (70 aa). A disordered region spans residues 689–710; that stretch reads VSALDEDDEEDPSNGDDYEGAA. Acidic residues predominate over residues 692 to 707; it reads LDEDDEEDPSNGDDYE. A helical membrane pass occupies residues 739–763; that stretch reads IEFCLNSVSHTASYLRLWALSLAHQ. At 764 to 784 the chain is on the vacuolar side; it reads QLSAVLWSMTMAKALESKGLG. Residues 785–823 traverse the membrane as a helical segment; the sequence is GAIFLVVAFAMFFVLSVIILIIMEGVSAMLHSLRLAWVE. Over 824–856 the chain is Cytoplasmic; sequence SFSKFAEFGGWPFTPFSFKQQLEESEELKEYIG.

This sequence belongs to the V-ATPase 116 kDa subunit family. In terms of assembly, V-ATPase is a heteromultimeric enzyme composed of a peripheral catalytic V1 complex (components A to H) attached to an integral membrane V0 proton pore complex (components: a, c, c', c'', d, e, f and VOA1).

The protein localises to the vacuole membrane. In terms of biological role, subunit of the V0 complex of vacuolar(H+)-ATPase (V-ATPase), a multisubunit enzyme composed of a peripheral complex (V1) that hydrolyzes ATP and a membrane integral complex (V0) that translocates protons. V-ATPase is responsible for acidifying and maintaining the pH of intracellular compartments. The protein is V-type proton ATPase subunit a (vph-1) of Neurospora crassa (strain ATCC 24698 / 74-OR23-1A / CBS 708.71 / DSM 1257 / FGSC 987).